The chain runs to 406 residues: Endoplasmic reticulum resident protein 44 (406 aa).

The N-terminal stretch at 1 to 29 is a signal peptide; sequence MNPAVFLSLADLRCSLLLLVTSIFTPITA. The 109-residue stretch at 30–138 folds into the Thioredoxin domain; that stretch reads EIASLDSENI…VKALADYIRQ (109 aa). Disulfide bonds link cysteine 189-cysteine 241 and cysteine 301-cysteine 318. The tract at residues 236 to 285 is interaction with ITPR1; it reads WIQDKCVPLVREITFENGEELTEEGLPFLILFHMKDDTESLEIFQNEVAR. Residues 360 to 387 are disordered; the sequence is FHHGPDPTDTAPGEQDQDVASSPPESSF. Over residues 377–387 the composition is skewed to polar residues; sequence DVASSPPESSF. Residues 403-406 carry the Prevents secretion from ER motif; sequence RDEL.

In terms of assembly, forms mixed disulfides with both ERO1A and ERO1B and cargo folding intermediates; the interactions with ERO1A and ERO1B result in their retention in the endoplasmic reticulum. Directly interacts with ITPR1 in a pH-, redox state- and calcium-dependent manner, but not with ITPR2 or ITPR3. The strength of this interaction inversely correlates with calcium concentration. Widely expressed.

The protein localises to the endoplasmic reticulum lumen. Functionally, mediates thiol-dependent retention in the early secretory pathway, forming mixed disulfides with substrate proteins through its conserved CRFS motif. Inhibits the calcium channel activity of ITPR1. May have a role in the control of oxidative protein folding in the endoplasmic reticulum. Required to retain ERO1A and ERO1B in the endoplasmic reticulum. This Mus musculus (Mouse) protein is Endoplasmic reticulum resident protein 44 (Erp44).